Consider the following 200-residue polypeptide: dITP/XTP pyrophosphatase (200 aa).

8-13 lines the substrate pocket; the sequence is TRNAGK. Aspartate 72 serves as the catalytic Proton acceptor. Aspartate 72 provides a ligand contact to Mg(2+). Residues serine 73, 155 to 158, lysine 178, and 183 to 184 contribute to the substrate site; these read FGYD and HR.

It belongs to the HAM1 NTPase family. As to quaternary structure, homodimer. The cofactor is Mg(2+).

It catalyses the reaction XTP + H2O = XMP + diphosphate + H(+). It carries out the reaction dITP + H2O = dIMP + diphosphate + H(+). The catalysed reaction is ITP + H2O = IMP + diphosphate + H(+). In terms of biological role, pyrophosphatase that catalyzes the hydrolysis of nucleoside triphosphates to their monophosphate derivatives, with a high preference for the non-canonical purine nucleotides XTP (xanthosine triphosphate), dITP (deoxyinosine triphosphate) and ITP. Seems to function as a house-cleaning enzyme that removes non-canonical purine nucleotides from the nucleotide pool, thus preventing their incorporation into DNA/RNA and avoiding chromosomal lesions. The polypeptide is dITP/XTP pyrophosphatase (Streptomyces coelicolor (strain ATCC BAA-471 / A3(2) / M145)).